The sequence spans 402 residues: Argininosuccinate synthase (402 aa).

Residues 10 to 18 (AYSGGVDTS) and Ala38 each bind ATP. Tyr89 serves as a coordination point for L-citrulline. Gly119 lines the ATP pocket. Positions 121, 125, and 126 each coordinate L-aspartate. Asn125 serves as a coordination point for L-citrulline. Residues Arg129, Ser177, Ser186, Glu262, and Tyr274 each coordinate L-citrulline.

Belongs to the argininosuccinate synthase family. Type 1 subfamily. As to quaternary structure, homotetramer.

The protein localises to the cytoplasm. The enzyme catalyses L-citrulline + L-aspartate + ATP = 2-(N(omega)-L-arginino)succinate + AMP + diphosphate + H(+). Its pathway is amino-acid biosynthesis; L-arginine biosynthesis; L-arginine from L-ornithine and carbamoyl phosphate: step 2/3. This chain is Argininosuccinate synthase, found in Prochlorococcus marinus (strain SARG / CCMP1375 / SS120).